The primary structure comprises 206 residues: MDSQQEDLRFPGMWVSLYFGILGLCSVITGGCIIFLHWRKNLRREEHAQQWVEVMRAATFTYSPLLYWINKRRRYGMNAAINTGPAPAVTKTETEVQNPDVLWDLDIPEGRSHADQDSNPKAEAPAPLQPALQLAPQQPQARSPFPLPIFQEVPFAPPLCNLPPLLNHSVSYPLATCPERNVLFHSLLNLAQEDHSFNAKPFPSEL.

A helical membrane pass occupies residues 15 to 35; that stretch reads VSLYFGILGLCSVITGGCIIF.

Its subcellular location is the membrane. The sequence is that of Testis-expressed protein 38 (TEX38) from Homo sapiens (Human).